Consider the following 271-residue polypeptide: Insulin-like growth factor-binding protein 5 (271 aa).

Positions 1 to 19 (MVLTAVLLLLAACAGSAQG) are cleaved as a signal peptide. The IGFBP N-terminal domain maps to 22–102 (SFVHCEPCDE…LHGRGVCLNE (81 aa)). Cystine bridges form between Cys-26/Cys-52, Cys-29/Cys-54, Cys-37/Cys-55, Cys-44/Cys-58, Cys-66/Cys-79, and Cys-73/Cys-99. Basic and acidic residues predominate over residues 109–121 (AKIERDSREHEEP). A disordered region spans residues 109–129 (AKIERDSREHEEPTTSEMAEE). A Phosphoserine modification is found at Ser-115. The 75-residue stretch at 188–262 (QGPCRRHMEA…MEYVDGDFQC (75 aa)) folds into the Thyroglobulin type-1 domain. 3 cysteine pairs are disulfide-bonded: Cys-191/Cys-218, Cys-229/Cys-240, and Cys-242/Cys-262.

In terms of assembly, interacts with IGF1; this interaction enhances the growth stimulatory effects of IGF1 on fibroblasts. Interacts with CAV1; this interaction allows trafficking of IGFBP5 from the plasma membrane to the nucleus. Interacts with NCL; this interaction is necessary for IGFBP5 localization to the nucleus.

The protein localises to the secreted. It is found in the cytoplasm. The protein resides in the nucleus. Functionally, multifunctional protein that plays a critical role in regulating the availability of IGFs to their receptors and thereby regulates IGF-mediated cellular processes including proliferation, differentiation, and apoptosis in a cell-type specific manner. Increases the cell proliferation of osteoblasts, intestinal smooth muscle cells and neuroblastoma cells. Enhances adhesion and survival of epithelial cells but decreases adhesion of mesenchymal cells. Once secreted, acts as a major mediator of mTORC1-dependent feedback inhibition of IGF1 signaling. Also plays a role in the induction of extracellular matrix (ECM) production and deposition independently of its nuclear translocation and binding to IGFs. Acts itself as a growth factor that can act independently of IGFs to regulate bone formation. Acts as a ligand for the ROR1 receptor which triggers formation of ROR1/HER2 heterodimer to enhance CREB oncogenic signaling. The protein is Insulin-like growth factor-binding protein 5 (IGFBP5) of Bos taurus (Bovine).